The chain runs to 127 residues: uncharacterized protein (127 aa).

This is an uncharacterized protein from Human cytomegalovirus (strain Toledo) (HHV-5).